We begin with the raw amino-acid sequence, 122 residues long: Large ribosomal subunit protein uL14 (122 aa).

Belongs to the universal ribosomal protein uL14 family. Part of the 50S ribosomal subunit. Forms a cluster with proteins L3 and L19. In the 70S ribosome, L14 and L19 interact and together make contacts with the 16S rRNA in bridges B5 and B8.

In terms of biological role, binds to 23S rRNA. Forms part of two intersubunit bridges in the 70S ribosome. This chain is Large ribosomal subunit protein uL14, found in Microcystis aeruginosa (strain NIES-843 / IAM M-2473).